Reading from the N-terminus, the 439-residue chain is Mitochondrial distribution and morphology protein 12 (439 aa).

Residues 1–439 (MSIDVNWRFA…VYPSFWTFLI (439 aa)) enclose the SMP-LTD domain. Disordered regions lie at residues 70–103 (YEED…LNEP), 185–274 (GWSD…PPRM), and 354–386 (PEQQ…RHGG). The segment covering 78–91 (TSDASEERGEEHSS) has biased composition (basic and acidic residues). Polar residues predominate over residues 215-245 (DTSNSTSRPSTANTLPSHPSGSSKNSGQAAT). Composition is skewed to basic and acidic residues over residues 247 to 261 (RNDH…HLED) and 362 to 371 (SAGDDHRPQS).

It belongs to the MDM12 family. In terms of assembly, component of the ER-mitochondria encounter structure (ERMES) or MDM complex, composed of mmm1, mdm10, mdm12 and mdm34. A mmm1 homodimer associates with one molecule of mdm12 on each side in a pairwise head-to-tail manner, and the SMP-LTD domains of mmm1 and mdm12 generate a continuous hydrophobic tunnel for phospholipid trafficking.

It is found in the mitochondrion outer membrane. Its subcellular location is the endoplasmic reticulum membrane. Functionally, component of the ERMES/MDM complex, which serves as a molecular tether to connect the endoplasmic reticulum (ER) and mitochondria. Components of this complex are involved in the control of mitochondrial shape and protein biogenesis, and function in nonvesicular lipid trafficking between the ER and mitochondria. Mdm12 is required for the interaction of the ER-resident membrane protein mmm1 and the outer mitochondrial membrane-resident beta-barrel protein mdm10. The mdm12-mmm1 subcomplex functions in the major beta-barrel assembly pathway that is responsible for biogenesis of all mitochondrial outer membrane beta-barrel proteins, and acts in a late step after the SAM complex. The mdm10-mdm12-mmm1 subcomplex further acts in the TOM40-specific pathway after the action of the mdm12-mmm1 complex. Essential for establishing and maintaining the structure of mitochondria and maintenance of mtDNA nucleoids. The protein is Mitochondrial distribution and morphology protein 12 of Aspergillus fumigatus (strain CBS 144.89 / FGSC A1163 / CEA10) (Neosartorya fumigata).